Consider the following 249-residue polypeptide: Ubiquinone/menaquinone biosynthesis C-methyltransferase UbiE (249 aa).

Residues Thr-72, Asp-93, and 121–122 each bind S-adenosyl-L-methionine; that span reads DA.

This sequence belongs to the class I-like SAM-binding methyltransferase superfamily. MenG/UbiE family.

It catalyses the reaction a 2-demethylmenaquinol + S-adenosyl-L-methionine = a menaquinol + S-adenosyl-L-homocysteine + H(+). It carries out the reaction a 2-methoxy-6-(all-trans-polyprenyl)benzene-1,4-diol + S-adenosyl-L-methionine = a 5-methoxy-2-methyl-3-(all-trans-polyprenyl)benzene-1,4-diol + S-adenosyl-L-homocysteine + H(+). Its pathway is quinol/quinone metabolism; menaquinone biosynthesis; menaquinol from 1,4-dihydroxy-2-naphthoate: step 2/2. The protein operates within cofactor biosynthesis; ubiquinone biosynthesis. Functionally, methyltransferase required for the conversion of demethylmenaquinol (DMKH2) to menaquinol (MKH2) and the conversion of 2-polyprenyl-6-methoxy-1,4-benzoquinol (DDMQH2) to 2-polyprenyl-3-methyl-6-methoxy-1,4-benzoquinol (DMQH2). This is Ubiquinone/menaquinone biosynthesis C-methyltransferase UbiE from Cellvibrio japonicus (strain Ueda107) (Pseudomonas fluorescens subsp. cellulosa).